The sequence spans 615 residues: DNA mismatch repair protein MutL (615 aa).

The tract at residues 370–397 is disordered; sequence EPVAPRYTPAPASGSRPAAPWPNTQPGY. Residues 378-391 show a composition bias toward low complexity; sequence PAPASGSRPAAPWP.

Belongs to the DNA mismatch repair MutL/HexB family.

This protein is involved in the repair of mismatches in DNA. It is required for dam-dependent methyl-directed DNA mismatch repair. May act as a 'molecular matchmaker', a protein that promotes the formation of a stable complex between two or more DNA-binding proteins in an ATP-dependent manner without itself being part of a final effector complex. This chain is DNA mismatch repair protein MutL, found in Shigella dysenteriae serotype 1 (strain Sd197).